A 184-amino-acid polypeptide reads, in one-letter code: Small ribosomal subunit protein uS4 (184 aa).

The 65-residue stretch at 108–172 (RRLQTQVHRL…SPMTKESHPE (65 aa)) folds into the S4 RNA-binding domain. The tract at residues 163 to 184 (SPMTKESHPERPAQIAASVVEE) is disordered.

Belongs to the universal ribosomal protein uS4 family. Part of the 30S ribosomal subunit. Contacts protein S5. The interaction surface between S4 and S5 is involved in control of translational fidelity.

One of the primary rRNA binding proteins, it binds directly to 16S rRNA where it nucleates assembly of the body of the 30S subunit. Its function is as follows. With S5 and S12 plays an important role in translational accuracy. The protein is Small ribosomal subunit protein uS4 of Methanococcoides burtonii (strain DSM 6242 / NBRC 107633 / OCM 468 / ACE-M).